The primary structure comprises 59 residues: Potassium channel toxin alpha-KTx 16.7 (59 aa).

The first 22 residues, 1–22 (MKILSILLIALVICSISICTEA), serve as a signal peptide directing secretion. 3 cysteine pairs are disulfide-bonded: Cys30–Cys51, Cys36–Cys56, and Cys40–Cys58.

This sequence belongs to the short scorpion toxin superfamily. Potassium channel inhibitor family. Alpha-KTx 16 subfamily. Expressed by the venom gland.

The protein resides in the secreted. May play a role in blocking voltage-gated potassium channels Kv1.2/KCNA2, and Kv1.3/KCNA3. Blocks the voltage-gated potassium channel Kv1.3/KCNA3, with an IC(50) of 118.3 +-55.8 nM. This Mesobuthus gibbosus (Mediterranean checkered scorpion) protein is Potassium channel toxin alpha-KTx 16.7.